The sequence spans 81 residues: Photosystem I iron-sulfur center (81 aa).

4Fe-4S ferredoxin-type domains are found at residues 2–31 (SHSV…MIPW) and 39–68 (IASA…VRVY). [4Fe-4S] cluster-binding residues include Cys-11, Cys-14, Cys-17, Cys-21, Cys-48, Cys-51, Cys-54, and Cys-58.

In terms of assembly, the eukaryotic PSI reaction center is composed of at least 11 subunits. [4Fe-4S] cluster serves as cofactor.

The protein resides in the plastid. It is found in the chloroplast thylakoid membrane. The catalysed reaction is reduced [plastocyanin] + hnu + oxidized [2Fe-2S]-[ferredoxin] = oxidized [plastocyanin] + reduced [2Fe-2S]-[ferredoxin]. Apoprotein for the two 4Fe-4S centers FA and FB of photosystem I (PSI); essential for photochemical activity. FB is the terminal electron acceptor of PSI, donating electrons to ferredoxin. The C-terminus interacts with PsaA/B/D and helps assemble the protein into the PSI complex. Required for binding of PsaD and PsaE to PSI. PSI is a plastocyanin-ferredoxin oxidoreductase, converting photonic excitation into a charge separation, which transfers an electron from the donor P700 chlorophyll pair to the spectroscopically characterized acceptors A0, A1, FX, FA and FB in turn. The chain is Photosystem I iron-sulfur center from Phaseolus vulgaris (Kidney bean).